Here is a 473-residue protein sequence, read N- to C-terminus: Ribulose bisphosphate carboxylase large chain (473 aa).

Substrate contacts are provided by N116 and T166. K168 acts as the Proton acceptor in catalysis. K170 lines the substrate pocket. 3 residues coordinate Mg(2+): K194, D196, and E197. K194 is modified (N6-carboxylysine). The active-site Proton acceptor is the H287. 3 residues coordinate substrate: R288, H320, and S372.

The protein belongs to the RuBisCO large chain family. Type I subfamily. As to quaternary structure, heterohexadecamer of 8 large chains and 8 small chains. Mg(2+) serves as cofactor.

It catalyses the reaction 2 (2R)-3-phosphoglycerate + 2 H(+) = D-ribulose 1,5-bisphosphate + CO2 + H2O. It carries out the reaction D-ribulose 1,5-bisphosphate + O2 = 2-phosphoglycolate + (2R)-3-phosphoglycerate + 2 H(+). RuBisCO catalyzes two reactions: the carboxylation of D-ribulose 1,5-bisphosphate, the primary event in carbon dioxide fixation, as well as the oxidative fragmentation of the pentose substrate. Both reactions occur simultaneously and in competition at the same active site. The protein is Ribulose bisphosphate carboxylase large chain of Thiomonas intermedia (strain K12) (Thiobacillus intermedius).